A 1244-amino-acid polypeptide reads, in one-letter code: Ras-specific guanine nucleotide-releasing factor 1 (1244 aa).

The PH 1 domain occupies 22 to 129; the sequence is DGTRKGYLSK…WVAAIARASY (108 aa). S71 is modified (phosphoserine; by PLK2). Positions 204–229 constitute an IQ domain; it reads KKIKKVQSFLRGWLCRRKWKNIIQDY. The DH domain occupies 240–426; the sequence is KRNQVVFSML…EELSRVMHDE (187 aa). The PH 2 domain occupies 456-582; that stretch reads TFVRQGSLIQ…WTSDIIQCVD (127 aa). S575 and S611 each carry phosphoserine; by PLK2. The N-terminal Ras-GEF domain occupies 629 to 743; it reads KVLQIRYASV…RRRKLSLNIP (115 aa). Residues 707 to 730 are disordered; the sequence is GDAPKSPRASRKFSSPPPLAIGTS. Position 739 is a phosphoserine (S739). Residues S760 and S781 each carry the phosphoserine; by PLK2 modification. The tract at residues 800–840 is disordered; the sequence is TLEESSGFRKPTSDILKEESDDDQSDVDDTEVSPPTPKSFR. A compositionally biased stretch (acidic residues) spans 818–830; it reads ESDDDQSDVDDTE. Position 854 is a phosphoserine; by PLK2 (S854). A Ras-GEF domain is found at 1009 to 1241; sequence SAMEIAEQLT…YEASLRIEPK (233 aa).

In terms of assembly, homooligomer and heterooligomer with RASGRF2. Interacts with USP8, thereby regulating its stability. In terms of processing, phosphorylated by PLK2, leading to ubiquitination and degradation by the proteasome. Ubiquitinated and degraded following phosphorylation by PLK2. Post-translationally, phosphorylated by SRC and LCK. Phosphorylation by LCK increases its capacity to stimulate the GDP/GTP exchange on Ras, whereas its phosphorylation by SRC seems not to have an effect on stimulation activity.

In terms of biological role, promotes the exchange of Ras-bound GDP by GTP. The protein is Ras-specific guanine nucleotide-releasing factor 1 (Rasgrf1) of Rattus norvegicus (Rat).